Consider the following 727-residue polypeptide: Phenylalanine ammonia-lyase str11 (727 aa).

Residue Tyr-105 is the Proton donor/acceptor of the active site. A cross-link (5-imidazolinone (Ala-Gly)) is located at residues 210–212 (ASG). Position 211 is a 2,3-didehydroalanine (Ser) (Ser-211). Residues Asn-271, Gln-361, Arg-367, Asn-397, Lys-468, Glu-496, and Asn-499 each contribute to the (E)-cinnamate site.

Belongs to the PAL/histidase family. Post-translationally, contains an active site 4-methylidene-imidazol-5-one (MIO), which is formed autocatalytically by cyclization and dehydration of residues Ala-Ser-Gly.

It carries out the reaction L-phenylalanine = (E)-cinnamate + NH4(+). Its pathway is mycotoxin biosynthesis. Functionally, phenylalanine ammonia-lyase; part of the gene cluster that mediates the biosynthesis of strobilurin A, an antifungal polyketide that contains a key beta-methoxyacrylate toxophore that targets the complex III of the mitochondrial electron transport chain. Strobilurin biosynthesis begins with construction of benzoyl CoA by step-wise elimination of ammonia from phenylalanine by the phenylalanine ammonia-lyase str11, oxygenation by str8 and retro-Claisen reaction to form benzoic acid, which is activated to its CoA thiolester benzoyl CoA by the dedicated CoA ligase str10. Benzoyl CoA forms the starter unit for the highly reducing polyketide synthase stpks1 that produces the polyketide prestrobilutin A. The FAD-dependent oxygenase str9 then catalyzes the key oxidative rearrangement responsible for the creation of the beta-methoxyacrylate toxophore. Str9 performs epoxidation of the 2,3 olefin of prestrobilutin A, followed by Meinwald rearrangement to furnish the aldehyde intermediate. Rapid enolization of the aldehyde intermediate would give the beta-methoxyacrylate skeleton and methylations catalyzed by str2 and str3 complete the synthesis and lead to the production of strobilurin A. The short-chain dehydrogenase stl2 and the dehydrogenase str4 play a role in the shunt pathway leading to the production of bolineol. The cluster encodes no obvious halogenase gene that could be involved in production of strobilurin B, nor any obvious dimethylallyl-transferase that could be involved in the production of strobilurin G. It is possible that unknown proteins encoded in, or near, the cluster (such as str1 or stl1) may form new classes of halogenases or dimethylally-transferases, or that the responsible genes are located elsewhere on the genome. Similarly, proteins encoded by str5/str6 hydrolases appear to have no chemical role in the biosynthesis of strobilurin A. Finally, no obvious self-resistance gene is found within the cluster. The sequence is that of Phenylalanine ammonia-lyase str11 from Strobilurus tenacellus.